A 61-amino-acid chain; its full sequence is Large ribosomal subunit protein uL30 (61 aa).

The protein belongs to the universal ribosomal protein uL30 family. Part of the 50S ribosomal subunit.

The polypeptide is Large ribosomal subunit protein uL30 (Corynebacterium jeikeium (strain K411)).